Here is a 244-residue protein sequence, read N- to C-terminus: Capsid protein (244 aa).

The Bipartite nuclear localization signal signature appears at 1–24 (MSTSKRKRGDDANWSKRVTKKKPS). Residues 1-39 (MSTSKRKRGDDANWSKRVTKKKPSSAGLKRAGSKADRPS) are disordered.

This sequence belongs to the geminiviridae capsid protein family. As to quaternary structure, homomultimer. Interacts with the movement protein. Binds to single-stranded and double-stranded viral DNA.

Its subcellular location is the virion. The protein resides in the host nucleus. Functionally, encapsidates the viral genome into characteristic twinned ('geminate') particles. Binds the genomic viral ssDNA and shuttles it into and out of the cell nucleus. Plays a role in protection of the genome from degradation, virus acquisition and transmission by insect vectors, infectivity, and systemic movement. The CP of monopartite geminiviruses is absolutely essential for virus movement. The polypeptide is Capsid protein (Maize streak virus genotype A (isolate Kenya) (MSV)).